We begin with the raw amino-acid sequence, 515 residues long: Methionine--tRNA ligase (515 aa).

The short motif at 13 to 23 (AYPNGKPHIGH) is the 'HIGH' region element. A 'KMSKS' region motif is present at residues 300–304 (KMSKS). Position 303 (Lys303) interacts with ATP.

This sequence belongs to the class-I aminoacyl-tRNA synthetase family. MetG type 2B subfamily. As to quaternary structure, monomer.

Its subcellular location is the cytoplasm. It carries out the reaction tRNA(Met) + L-methionine + ATP = L-methionyl-tRNA(Met) + AMP + diphosphate. In terms of biological role, is required not only for elongation of protein synthesis but also for the initiation of all mRNA translation through initiator tRNA(fMet) aminoacylation. This chain is Methionine--tRNA ligase, found in Brucella suis biovar 1 (strain 1330).